A 44-amino-acid polypeptide reads, in one-letter code: Cytochrome b559 subunit beta (44 aa).

The helical transmembrane segment at 19–35 (WIAVHTLAVPSVFFLGA) threads the bilayer. H23 provides a ligand contact to heme.

The protein belongs to the PsbE/PsbF family. As to quaternary structure, heterodimer of an alpha subunit and a beta subunit. PSII is composed of 1 copy each of membrane proteins PsbA, PsbB, PsbC, PsbD, PsbE, PsbF, PsbH, PsbI, PsbJ, PsbK, PsbL, PsbM, PsbT, PsbX, PsbY, PsbZ, Psb30/Ycf12, peripheral proteins PsbO, CyanoQ (PsbQ), PsbU, PsbV and a large number of cofactors. It forms dimeric complexes. Heme b is required as a cofactor.

The protein localises to the cellular thylakoid membrane. In terms of biological role, this b-type cytochrome is tightly associated with the reaction center of photosystem II (PSII). PSII is a light-driven water:plastoquinone oxidoreductase that uses light energy to abstract electrons from H(2)O, generating O(2) and a proton gradient subsequently used for ATP formation. It consists of a core antenna complex that captures photons, and an electron transfer chain that converts photonic excitation into a charge separation. This is Cytochrome b559 subunit beta from Cyanothece sp. (strain PCC 7425 / ATCC 29141).